Reading from the N-terminus, the 771-residue chain is Probable cation-transporting ATPase G (771 aa).

The HMA domain maps to 19-86 (GRMRVQATGF…AIIDAETVPA (68 aa)). The chain crosses the membrane as a helical span at residues 72–92 (AAILSAIIDAETVPAAAVPAY). Residues 122-143 (DVAAQPSGETSDACCDGEDNED) form a disordered region. Transmembrane regions (helical) follow at residues 163–183 (VLLT…VVLG), 209–229 (VGVG…GELG), 330–350 (VFAG…ATAA), 387–407 (MIAA…LVWI), and 411–431 (LVVL…VTVV). The 4-aspartylphosphate intermediate role is filled by D462. Mg(2+)-binding residues include D651 and D655. 2 helical membrane-spanning segments follow: residues 657 to 677 (PALA…DVAI) and 716 to 736 (IITV…AVVL).

Belongs to the cation transport ATPase (P-type) (TC 3.A.3) family. Type IB subfamily.

The protein resides in the cell membrane. The enzyme catalyses ATP + H2O = ADP + phosphate + H(+). The polypeptide is Probable cation-transporting ATPase G (ctpG) (Mycobacterium bovis (strain ATCC BAA-935 / AF2122/97)).